The sequence spans 325 residues: Ribonucleoside-diphosphate reductase small chain (325 aa).

Fe cation contacts are provided by D74, E105, and H108. Residue Y112 is part of the active site. Fe cation contacts are provided by E168, E202, and H205.

Belongs to the ribonucleoside diphosphate reductase small chain family. In terms of assembly, heterodimer of a large and a small chain. Fe cation is required as a cofactor.

The catalysed reaction is a 2'-deoxyribonucleoside 5'-diphosphate + [thioredoxin]-disulfide + H2O = a ribonucleoside 5'-diphosphate + [thioredoxin]-dithiol. Its function is as follows. Ribonucleoside-diphosphate reductase holoenzyme provides the precursors necessary for viral DNA synthesis. Allows virus growth in non-dividing cells. Catalyzes the biosynthesis of deoxyribonucleotides from the corresponding ribonucleotides. This chain is Ribonucleoside-diphosphate reductase small chain, found in Yaba-like disease virus (YLDV).